Reading from the N-terminus, the 153-residue chain is Endoribonuclease YbeY (153 aa).

Residues His-114, His-118, and His-124 each coordinate Zn(2+).

This sequence belongs to the endoribonuclease YbeY family. The cofactor is Zn(2+).

The protein resides in the cytoplasm. Its function is as follows. Single strand-specific metallo-endoribonuclease involved in late-stage 70S ribosome quality control and in maturation of the 3' terminus of the 16S rRNA. This chain is Endoribonuclease YbeY, found in Nitrosococcus oceani (strain ATCC 19707 / BCRC 17464 / JCM 30415 / NCIMB 11848 / C-107).